A 65-amino-acid polypeptide reads, in one-letter code: UPF0434 protein BRADO0313 (65 aa).

It belongs to the UPF0434 family.

This chain is UPF0434 protein BRADO0313, found in Bradyrhizobium sp. (strain ORS 278).